The chain runs to 332 residues: Melanocortin receptor 4 (332 aa).

Over 1–43 (MNSTHHHGMYTSLHLWNRSSHGLHGNASESLGKGHSDGGCYEQ) the chain is Extracellular. 3 N-linked (GlcNAc...) asparagine glycosylation sites follow: Asn2, Asn17, and Asn26. Cystine bridges form between Cys40–Cys279 and Cys271–Cys277. A helical membrane pass occupies residues 44–69 (LFVSPEVFVTLGVISLLENILVIVAI). The Cytoplasmic segment spans residues 70-81 (AKNKNLHSPMYF). Residues 82–106 (FICSLAVADMLVSVSNGSETIVITL) form a helical membrane-spanning segment. Positions 100, 122, and 126 each coordinate Ca(2+). Residues 107 to 123 (LNSTDTDAQSFTVNIDN) are Extracellular-facing. A helical transmembrane segment spans residues 124 to 145 (VIDSVICSSLLASICSLLSIAV). Residues 146-165 (DRYFTIFYALQYHNIMTVRR) are Cytoplasmic-facing. The helical transmembrane segment at 166-186 (VGIIISCIWAACTVSGVLFII) threads the bilayer. The Extracellular segment spans residues 187-191 (YSDSS). Residues 192 to 215 (AVIICLITMFFTMLVLMASLYVHM) traverse the membrane as a helical segment. Residues 216–248 (FLMARLHIKRIAVLPGTGTIRQGANMKGAITLT) lie on the Cytoplasmic side of the membrane. A helical membrane pass occupies residues 249 to 271 (ILIGVFVVCWAPFFLHLLFYISC). The Extracellular segment spans residues 272–280 (PQNPYCVCF). A helical transmembrane segment spans residues 281–304 (MSHFNLYLILIMCNAVIDPLIYAL). The Cytoplasmic portion of the chain corresponds to 305–332 (RSQELRKTFKEIICFYPLGGICELPGRY). Cys318 is lipidated: S-palmitoyl cysteine.

Belongs to the G-protein coupled receptor 1 family. As to quaternary structure, homodimer; disulfide-linked, also forms higher order oligomers. Interacts with GNAS. Interacts with ATRNL1. Interacts with MGRN1; this interaction competes with GNAS-binding and thus inhibits agonist-induced cAMP production. Interacts with MRAP and MRAP2; these associated factors increase ligand-sensitivity and generation of cAMP. In terms of tissue distribution, brain, enriched in the striatum, nucleus accumbens, and periaqueductal gray.

Its subcellular location is the cell membrane. Its function is as follows. Hormone receptor that acts as a key component of the leptin-melanocortin pathway at the intersection of homeostatic maintenance of energetic state. Plays a role in regulating food intake: activation by a stimulating hormone such as anorexigenic alpha-melanocyte stimulating hormone (alpha-MSH) inhibits appetite, whereas binding to a natural antagonist like Agouti-related protein/AGRP promotes appetite. G-protein-coupled receptor that activates conventional Galphas signaling leading to induction of anorexogenic signaling in the hypothalamus to result in negative energy balance. Regulates the firing activity of neurons from the hypothalamus by alpha-MSH and AGRP independently of Galphas signaling by ligand-induced coupling of closure of inwardly rectifying potassium channel KCNJ13. In intestinal epithelial cells, plays a role in the inhibition of hepatic glucose production via nesfatin-1/NUCB2 leading to increased cyclic adenosine monophosphate (cAMP) levels and glucagon-like peptide 1 (GLP-1) secretion in the intestinal epithelium. The polypeptide is Melanocortin receptor 4 (Mc4r) (Rattus norvegicus (Rat)).